Here is a 222-residue protein sequence, read N- to C-terminus: Ras-related protein Rab-21 (222 aa).

Ala2 carries the N-acetylalanine modification. Residues Gly26, Gly29, Lys30, Thr31, Ser32, Asn43, Asp44, His46, Thr48, and Thr49 each contribute to the GTP site. Position 31 (Thr31) interacts with Mg(2+). Positions 41–54 match the Switch 1 motif; the sequence is KFNDKHITTLQASF. Positions 49 and 72 each coordinate Mg(2+). A Switch 2 motif is present at residues 74–92; it reads AGQERFHALGPIYYRDSNG. Residues Gly75, Asn130, Lys131, Asp133, Ala161, and Lys162 each contribute to the GTP site. 2 S-geranylgeranyl cysteine lipidation sites follow: Cys218 and Cys219. Cys219 bears the Cysteine methyl ester mark. A propeptide spans 220-222 (removed in mature form); the sequence is SSG.

The protein belongs to the small GTPase superfamily. Rab family. In terms of assembly, interacts with the cytoplasmic tail of integrins ITGA1, ITGA2, ITGA5, ITGA6, ITGA11 and ITGB1; this interaction is dependent upon its GDP/GTP cycle. Interacts with RABGEF1 (via VPS9 domain). Interacts with ANKRD27. Interacts with VAMP7. Interacts (in GTP-bound form) with VAMP8 in response to starvation; the interaction probably regulates VAMP8 endolysosomal trafficking. Interacts (active GTP-bound form) with TMED10; the interaction is indirect and regulates TMED10 abundance and localization at the Golgi. The cofactor is Mg(2+).

It is found in the endoplasmic reticulum membrane. It localises to the golgi apparatus. The protein localises to the trans-Golgi network. The protein resides in the golgi apparatus membrane. Its subcellular location is the early endosome membrane. It is found in the cytoplasmic vesicle membrane. It localises to the cleavage furrow. The protein localises to the cell projection. The protein resides in the neuron projection. The enzyme catalyses GTP + H2O = GDP + phosphate + H(+). Regulated by guanine nucleotide exchange factors (GEFs) including ANKRD27 and RABGEF1, which promote the exchange of bound GDP for free GTP. Regulated by GTPase activating proteins (GAPs) which increase the GTP hydrolysis activity. Inhibited by GDP dissociation inhibitors (GDIs). In terms of biological role, the small GTPases Rab are key regulators of intracellular membrane trafficking, from the formation of transport vesicles to their fusion with membranes. Rabs cycle between an inactive GDP-bound form and an active GTP-bound form that is able to recruit to membranes different sets of downstream effectors directly responsible for vesicle formation, movement, tethering and fusion. RAB21 is involved in membrane trafficking control. Regulates integrin internalization and recycling, but does not influence the traffic of endosomally translocated receptors in general. As a result, may regulate cell adhesion and migration. During the mitosis of adherent cells, controls the endosomal trafficking of integrins which is required for the successful completion of cytokinesis. Involved in neurite growth. Following SBF2/MTMT13-mediated activation in response to starvation-induced autophagy, binds to and regulates SNARE protein VAMP8 endolysosomal transport required for SNARE-mediated autophagosome-lysosome fusion. Modulates protein levels of the cargo receptors TMED2 and TMED10, and required for appropriate Golgi localization of TMED10. The polypeptide is Ras-related protein Rab-21 (Mus musculus (Mouse)).